The sequence spans 242 residues: ATP synthase subunit a (242 aa).

Helical transmembrane passes span 21–41, 83–103, 117–137, 175–195, and 198–218; these read LSSILMILVTAFLVFLLAIIC, AVTLILYIFIANMLGLPFSIV, DATVTLTLSTTIILLTHFYGI, LYGNIFAGEILLTLLAGLFFN, and AWGWIISIPGLIVWQAFSIFV.

It belongs to the ATPase A chain family. As to quaternary structure, F-type ATPases have 2 components, CF(1) - the catalytic core - and CF(0) - the membrane proton channel. CF(1) has five subunits: alpha(3), beta(3), gamma(1), delta(1), epsilon(1). CF(0) has three main subunits: a(1), b(2) and c(9-12). The alpha and beta chains form an alternating ring which encloses part of the gamma chain. CF(1) is attached to CF(0) by a central stalk formed by the gamma and epsilon chains, while a peripheral stalk is formed by the delta and b chains.

The protein localises to the cell membrane. Key component of the proton channel; it plays a direct role in the translocation of protons across the membrane. The chain is ATP synthase subunit a from Staphylococcus aureus (strain Newman).